The sequence spans 470 residues: Cell division protein FtsA (470 aa).

Residues 416-470 are disordered; that stretch reads NKKDTHENEVESTDEEIYQSEDNHQEHKQNHEHVQDKDKDKEESKFKKLMKSLFE. Residues 425–434 are compositionally biased toward acidic residues; it reads VESTDEEIYQ. The segment covering 436–461 has biased composition (basic and acidic residues); sequence EDNHQEHKQNHEHVQDKDKDKEESKF.

Belongs to the FtsA/MreB family. Self-interacts. Interacts with FtsZ.

It localises to the cell membrane. Functionally, cell division protein that is involved in the assembly of the Z ring. May serve as a membrane anchor for the Z ring. The chain is Cell division protein FtsA from Staphylococcus aureus (strain NCTC 8325 / PS 47).